Reading from the N-terminus, the 1231-residue chain is RNA-binding protein 33 (1231 aa).

Gly residues predominate over residues Met1–Ala13. 2 disordered regions span residues Met1–Gln168 and Ser219–Glu261. Ala2 carries the post-translational modification N-acetylalanine. The span at Gln20–Asp36 shows a compositional bias: basic and acidic residues. A compositionally biased stretch (acidic residues) spans Glu37 to Gly49. A Phosphoserine modification is found at Ser41. The span at Phe82–Asn108 shows a compositional bias: polar residues. Composition is skewed to acidic residues over residues Gly112 to Glu124 and Leu153 to Gln168. Basic and acidic residues predominate over residues Glu224 to Lys240. The span at Glu241–Glu252 shows a compositional bias: acidic residues. Ser243 and Ser271 each carry phosphoserine. Disordered regions lie at residues Phe297–His436 and Pro452–Glu761. Basic residues predominate over residues Lys305–Arg316. Positions Gly327–Pro344 are enriched in basic and acidic residues. The segment covering Leu360–Gln379 has biased composition (pro residues). Positions Gln380–Gln398 are enriched in low complexity. Over residues Phe469–Val483 the composition is skewed to pro residues. At Arg520 the chain carries Asymmetric dimethylarginine. Composition is skewed to pro residues over residues Ser531 to Thr540, Phe604 to Pro618, Leu632 to Gln647, and Pro661 to His682. Composition is skewed to polar residues over residues Gln713–Pro728 and Ala736–Leu759. Phosphoserine occurs at positions 792 and 816. 3 disordered regions span residues Arg796–Leu840, Glu876–Ala932, and Glu998–Gln1080. Over residues Gln820–Ala829 the composition is skewed to basic and acidic residues. Residues Leu840–Gln891 adopt a coiled-coil conformation. The span at Gln880–Gln901 shows a compositional bias: low complexity. A phosphoserine mark is found at Ser1002 and Ser1010. A Glycyl lysine isopeptide (Lys-Gly) (interchain with G-Cter in SUMO2) cross-link involves residue Lys1019. Residues Ser1032 and Ser1051 each carry the phosphoserine modification.

Associates with the NXF1-NXT1 RNA export complex. Interacts with ALKBH5; facilitating ALKBH5 recruitment to m6A-containing transcripts. Interacts with SENP1; promoting ALKBH5 deSUMOylation and subsequent activation.

Its subcellular location is the nucleus. It is found in the cytoplasm. In terms of biological role, RNA reader protein, which recognizes and binds specific RNAs, thereby regulating RNA metabolic processes, such as mRNA export, mRNA stability and/or translation. Binds a subset of intronless RNAs containing GC-rich elements, such as NORAD, and promotes their nuclear export by recruiting target RNAs to components of the NXF1-NXT1 RNA export machinery. Specifically recognizes and binds N6-methyladenosine (m6A)-containing mRNAs, promoting their demethylation by ALKBH5. Acts as an molecular adapter, which (1) promotes ALKBH5 recruitment to m6A-containing transcripts and (2) activates ALKBH5 demethylase activity by recruiting SENP1, leading to ALKBH5 deSUMOylation and subsequent activation. The sequence is that of RNA-binding protein 33 from Mus musculus (Mouse).